Reading from the N-terminus, the 198-residue chain is 3-isopropylmalate dehydratase small subunit (198 aa).

The protein belongs to the LeuD family. LeuD type 1 subfamily. Heterodimer of LeuC and LeuD.

The catalysed reaction is (2R,3S)-3-isopropylmalate = (2S)-2-isopropylmalate. Its pathway is amino-acid biosynthesis; L-leucine biosynthesis; L-leucine from 3-methyl-2-oxobutanoate: step 2/4. Functionally, catalyzes the isomerization between 2-isopropylmalate and 3-isopropylmalate, via the formation of 2-isopropylmaleate. The protein is 3-isopropylmalate dehydratase small subunit of Corynebacterium jeikeium (strain K411).